The primary structure comprises 916 residues: MDYKDTLLMPKTDFPMRGGLPNKEPKIQEEWDAKNIYQKVLDKNEGNPSFILHDGPPYANGNLHMGHALNKILKDIITRYKSMLGYYAPYVPGWDTHGLPIEQALTKKGVKRKELSIAEFRKKCEAFALEQIDNQKKDFKRLGVKGDFNNPYITLKPEYEAAQIRLFGEMADKGLIYKGKKPVYWSPSSESSLAEAEIEYQDKRSPSIYVAFDVIDGKGIVDDDAQFIIWTTTPWTLPSNVAITVHPDLTYGQYNVNGKKYIIGKDLASDVAEALDWDEDTLELEKEFKGKDLEYIKAQHPFFDRESLVINGLHVTTDAGTGCVHTAPGHGEDDYIVGQKYNLPVISPVDDKGVFTDEAGQFEGMFYDKANKEITDLLKEDGSLLKLEFITHSYPHDWRTKKPVIFRATPQWFASIDKVREDILSAIDDTQFKVDWGKTRIYNMIRDRGEWVISRQRVWGVPLPVFYAENGDIIMTSETVNHVADLFEANGSNIWFEREAKDLLPEGFTHPGSPNGEFTKETDIMDVWFDSGSSHRGVLEARPELSYPADLYLEGSDQYRGWFNSSITTSVATRGQSPYKMLLSHGFVMDGEGKKMSKSLGNVIVPDQIVKQKGADIARLWVSSVDYLADVRISDEILKQSSDVYRKIRNTLRFMLGNVSDYNPATDAIAEKDLLEVDKYLLNRLREFTANTLDHYDNYDYLDIYQEVQNFINVELSNFYLDYGKDILYIEERDSHKRRSMQTVLYQIVVDMTKLLAPILVHTAEEVWSHIPHVEEESVHLTNMPERVEIDQAFVDRWNTFMKLRDDVNRALEVARNEKVIGKSLEAKVVIGSNENFDATTFLQQFKDLQQLFITSQAEVVDKVDDGVAYQHGDIRIEHAHGEKCERCWNYSEELGSVGELDNLCPRCQAVVKTLV.

A 'HIGH' region motif is present at residues 57–67 (PYANGNLHMGH). Glu554 lines the L-isoleucyl-5'-AMP pocket. Residues 595–599 (KMSKS) carry the 'KMSKS' region motif. ATP is bound at residue Lys598. Zn(2+) contacts are provided by Cys885, Cys888, Cys905, and Cys908.

Belongs to the class-I aminoacyl-tRNA synthetase family. IleS type 1 subfamily. In terms of assembly, monomer. Zn(2+) is required as a cofactor.

It is found in the cytoplasm. It catalyses the reaction tRNA(Ile) + L-isoleucine + ATP = L-isoleucyl-tRNA(Ile) + AMP + diphosphate. Functionally, catalyzes the attachment of isoleucine to tRNA(Ile). As IleRS can inadvertently accommodate and process structurally similar amino acids such as valine, to avoid such errors it has two additional distinct tRNA(Ile)-dependent editing activities. One activity is designated as 'pretransfer' editing and involves the hydrolysis of activated Val-AMP. The other activity is designated 'posttransfer' editing and involves deacylation of mischarged Val-tRNA(Ile). This chain is Isoleucine--tRNA ligase, found in Staphylococcus saprophyticus subsp. saprophyticus (strain ATCC 15305 / DSM 20229 / NCIMB 8711 / NCTC 7292 / S-41).